The following is a 580-amino-acid chain: Small conductance calcium-activated potassium channel protein 2 (580 aa).

2 disordered regions span residues 1-68 and 88-116; these read MSSC…VSKP and GGGG…KKNQ. Over residues 48 to 61 the composition is skewed to low complexity; the sequence is SSPSAAAAASSSAP. The span at 88 to 104 shows a compositional bias: gly residues; sequence GGGGGGGGGGGGSGHGS. Residues 140–160 traverse the membrane as a helical segment; the sequence is LIFGMFGIVVMVIETELSWGA. Tyrosine 161 is modified (phosphotyrosine). The chain crosses the membrane as a helical span at residues 169 to 189; it reads LALKCLISLSTIILLGLIIVY. A helical membrane pass occupies residues 215–235; sequence IFFICLEILVCAIHPIPGNYT. Residues 257 to 277 traverse the membrane as a helical segment; sequence IILSIPMFLRLYLIARVMLLH. Residues 306 to 326 traverse the membrane as a helical segment; the sequence is LMTICPGTVLLVFSISLWIIA. Positions 346-366 form an intramembrane region, pore-forming; the sequence is FLGAMWLISITFLSIGYGDMV. A helical transmembrane segment spans residues 375 to 395; that stretch reads VCLLTGIMGAGCTALVVAVVA. Residues 413–489 form a calmodulin-binding region; that stretch reads DTQLTKRVKN…LVDLAKTQNI (77 aa). The segment covering 551-560 has biased composition (basic and acidic residues); sequence HVTYNAERSR. Residues 551–580 are disordered; it reads HVTYNAERSRSSSRRRRSSSTAPPTSSESS. Positions 569 to 580 are enriched in low complexity; sequence SSTAPPTSSESS.

It belongs to the potassium channel KCNN family. KCa2.2/KCNN2 subfamily. As to quaternary structure, homodimer. Heteromultimer with KCNN1 and KCNN3. The complex is composed of 4 channel subunits each of which binds to a calmodulin subunit which regulates the channel activity through calcium-binding. Interacts (via N-terminal domain) with MPP2. Brain.

It localises to the membrane. The protein resides in the cytoplasm. It is found in the myofibril. Its subcellular location is the sarcomere. The protein localises to the z line. The catalysed reaction is K(+)(in) = K(+)(out). Its activity is regulated as follows. Inhibited by bee venom neurotoxin apamin. Inhibited by UCL 1684 and tetraethylammonium (TEA). Small conductance calcium-activated potassium channel that mediates the voltage-independent transmembrane transfer of potassium across the cell membrane through a constitutive interaction with calmodulin which binds the intracellular calcium allowing its opening. The current is characterized by a voltage-independent activation, an intracellular calcium concentration increase-dependent activation and a single-channel conductance of about 3 picosiemens. Also presents an inwardly rectifying current, thus reducing its already small outward conductance of potassium ions, which is particularly the case when the membrane potential displays positive values, above + 20 mV. The inward rectification could be due to a blockade of the outward current by intracellular divalent cations such as calcium and magnesium and could also be due to an intrinsic property of the channel pore, independent of intracellular divalent ions. There are three positively charged amino acids in the S6 transmembrane domain, close to the pore, that collectively control the conductance and rectification through an electrostatic mechanism. Additionally, electrostatic contributions from these residues also play an important role in determining the intrinsic open probability of the channel in the absence of calcium, affecting the apparent calcium affinity for activation. Forms an heteromeric complex with calmodulin, which is constitutively associated in a calcium-independent manner. Channel opening is triggered when calcium binds the calmodulin resulting in a rotary movement leading to the formation of the dimeric complex to open the gate. Plays a role in the repolarization phase of cardiac action potential. The protein is Small conductance calcium-activated potassium channel protein 2 of Rattus norvegicus (Rat).